Consider the following 875-residue polypeptide: Receptor-like protein 33 (875 aa).

Residues 1–23 form the signal peptide; it reads MSLIPITFYFLFLFFSNFRGVFA. Over 24 to 822 the chain is Extracellular; sequence VPNIHLCHFE…GESETLESEQ (799 aa). N-linked (GlcNAc...) asparagine glycans are attached at residues Asn-65, Asn-103, Asn-133, Asn-146, and Asn-181. 10 LRR repeats span residues 110–133, 134–157, 159–182, 183–205, 206–230, 231–254, 256–278, 280–302, 303–327, and 329–351; these read FHFL…SIGN, LSHL…SLGN, FHLT…LGNL, SYLT…SFGS, LNQL…VINL, TKLS…ITSL, ILES…LFTI, SITL…NISS, PSNL…ISRL, and NLRT…IFSH. Asn-229 and Asn-250 each carry an N-linked (GlcNAc...) asparagine glycan. An N-linked (GlcNAc...) asparagine glycan is attached at Asn-299. An LRR 11; degenerate repeat occupies 352-377; the sequence is LKLLGNLYLSHSNTTTTIDLNAVLSC. N-linked (GlcNAc...) asparagine glycans are attached at residues Asn-364, Asn-395, and Asn-411. 15 LRR repeats span residues 378 to 401, 404 to 427, 428 to 451, 455 to 477, 479 to 502, 503 to 528, 530 to 549, 550 to 573, 575 to 596, 597 to 619, 620 to 643, 686 to 710, 711 to 734, 735 to 758, and 760 to 783; these read FKML…SVSD, LGLI…LRTQ, RQMR…LLLQ, MHIS…TVVP, PSMK…ICSL, RSLI…KFKS, LSDL…KTII, KSLR…LIHF, TLEV…WLSS, LKKL…KTRF, PKLR…CFVE, LKIY…IGLL, KELH…MGNL, RELE…LGNL, and YLAY…QFRT. Residues Asn-490 and Asn-514 are each glycosylated (N-linked (GlcNAc...) asparagine). An N-linked (GlcNAc...) asparagine glycan is attached at Asn-587. N-linked (GlcNAc...) asparagine glycosylation occurs at Asn-633. Asn-717, Asn-757, and Asn-765 each carry an N-linked (GlcNAc...) asparagine glycan. A helical transmembrane segment spans residues 823 to 843; that stretch reads VLSWIAAAIGFTPGIVLGLTI. The Cytoplasmic portion of the chain corresponds to 844–875; the sequence is GHIVLSSKPRWFFKVLYINNSRRRRRTRSEKS.

Belongs to the RLP family.

The protein resides in the cell membrane. This chain is Receptor-like protein 33, found in Arabidopsis thaliana (Mouse-ear cress).